Consider the following 1307-residue polypeptide: Cyclic nucleotide-gated channel beta-1 (1307 aa).

Disordered stretches follow at residues 1-101 (MLGW…AQVA), 126-178 (QPVY…TEPS), 193-262 (LPQP…PGDP), 320-458 (DSCW…LDSC), 470-625 (LERA…SQNS), and 648-681 (EKLI…KPAE). Over 1–720 (MLGWVQRVLP…SIDPLTNLMY (720 aa)) the chain is Cytoplasmic. Acidic residues predominate over residues 43-59 (VQPEPEPEPEPAPEEAA). Positions 165–174 (GSDKTSKTQD) are enriched in basic and acidic residues. Residues 361–386 (QEEEEEEKEEKEEKEEEEEKEEEEKR) show a composition bias toward acidic residues. The segment covering 387–406 (EEEKKKEKEEEKKEKEKEEK) has biased composition (basic and acidic residues). 2 stretches are compositionally biased toward acidic residues: residues 407–451 (EEKE…EEEP) and 483–518 (LPEE…EEGE). Residues 550–560 (TIPPPERPPVS) show a composition bias toward pro residues. The calmodulin-binding CaM1 stretch occupies residues 621 to 631 (ASQNSAIINDR). The helical transmembrane segment at 721–742 (ILWLFFVVLAWNWNCWLIPVRW) threads the bilayer. Over 743–751 (AFPYQRADN) the chain is Extracellular. A helical transmembrane segment spans residues 752 to 773 (IHLWLLMDYLCDFIYLLDITVF). Topologically, residues 774–788 (QMRLQFVKGGDIITD) are cytoplasmic. The chain crosses the membrane as a helical span at residues 789-808 (KKEMRNNYLKSQRFKMDLLC). Over 809 to 824 (LLPLDFLYLKLGVNPL) the chain is Extracellular. Residues 825–837 (LRLPRCLKYMAFF) form a helical membrane-spanning segment. The Cytoplasmic portion of the chain corresponds to 838–849 (EFNNRLEAILSK). A helical membrane pass occupies residues 850–872 (AYVYRVIRTTAYLLYSLHLNSCL). Residues 850–949 (AYVYRVIRTT…IGQMRDVVGA (100 aa)) form an ion conduction pathway region. The Extracellular portion of the chain corresponds to 873–895 (YYWASAFQGIGSTHWVYDGVGNS). The next 2 membrane-spanning stretches (helical) occupy residues 896-922 (YIRC…LFEI) and 923-948 (VFQL…DVVG). Residues 949–1307 (AATAGQTYYR…MLEEKKEEVE (359 aa)) lie on the Cytoplasmic side of the membrane. The tract at residues 952–1028 (AGQTYYRSCM…NIVSKVALFQ (77 aa)) is C-linker. The cNMP-binding domain stretch occupies residues 1026 to 1130 (LFQGCDRQMI…LDKKDLNEIL (105 aa)). Residues 1032 to 1148 (RQMIFDMLKR…LLRKKARRML (117 aa)) form a cyclic nucleotide-binding domain region. Positions 1093, 1094, 1096, 1106, and 1107 each coordinate 3',5'-cyclic GMP. R1106 contributes to the 3',5'-cyclic AMP binding site. Residues 1212–1218 (QQQLLEQ) are calmodulin-binding CaM2. The span at 1214–1238 (QLLEQAKSSQEAGGEEGSGATDQPA) shows a compositional bias: low complexity. The disordered stretch occupies residues 1214 to 1307 (QLLEQAKSSQ…MLEEKKEEVE (94 aa)). Positions 1250–1261 (EPPAPSSPPPAS) are enriched in pro residues.

It belongs to the cyclic nucleotide-gated cation channel (TC 1.A.1.5) family. CNGB1 subfamily. As to quaternary structure, the rod cyclic nucleotide-gated channel is a heterotetramer composed of CNGA1 and CNGB1 subunits with 3:1 stoichiometry. CNGA1:CNGB1 channel binds Ca(2+)-bound CALM1 via CaM1 and CaM2 regions of the CNGB1 subunit; this interaction modulates the affinity of the channel for cNMPs in response to intracellular Ca(2+) levels. In terms of assembly, the olfactory cyclic nucleotide-gated channel is a heterotetramer composed of CNGA2, CNGA4 and CNGB1b subunits with 2:1:1 stoichiometry. As to expression, expressed in olfactory sensory cilia (at protein level).

Its subcellular location is the cell projection. It is found in the cilium membrane. It carries out the reaction Ca(2+)(in) = Ca(2+)(out). The catalysed reaction is Na(+)(in) = Na(+)(out). The enzyme catalyses K(+)(in) = K(+)(out). It catalyses the reaction NH4(+)(in) = NH4(+)(out). It carries out the reaction Rb(+)(in) = Rb(+)(out). The catalysed reaction is Li(+)(in) = Li(+)(out). The enzyme catalyses Cs(+)(in) = Cs(+)(out). Pore-forming subunit of the rod cyclic nucleotide-gated channel. Mediates rod photoresponses at dim light converting transient changes in intracellular cGMP levels into electrical signals. In the dark, cGMP levels are high and keep the channel open enabling a steady inward current carried by Na(+) and Ca(2+) ions that leads to membrane depolarization and neurotransmitter release from synaptic terminals. Upon photon absorption cGMP levels decline leading to channel closure and membrane hyperpolarization that ultimately slows neurotransmitter release and signals the presence of light, the end point of the phototransduction cascade. Conducts cGMP- and cAMP-gated ion currents, with permeability for monovalent and divalent cations. The selectivity for Ca(2+) over Na(+) increases with cGMP concentrations, whereas the selectivity among monovalent ions is independent of the cGMP levels. Functionally, pore-forming subunit of the olfactory cyclic nucleotide-gated channel. Operates in the cilia of olfactory sensory neurons where chemical stimulation of the odorant is converted to an electrical signal. Mediates odorant-induced cAMP-dependent Ca(2+) influx triggering neuron depolarization. The rise of intracellular Ca(2+) levels potentiates the olfactory response by activating Ca(2+)-dependent Cl(-) channels, but it also serves as a negative feedback signal to desensitize the channel for rapid adaptation to odorants. In Rattus norvegicus (Rat), this protein is Cyclic nucleotide-gated channel beta-1.